The chain runs to 457 residues: NADH-quinone oxidoreductase subunit N (457 aa).

Transmembrane regions (helical) follow at residues 2 to 22 (NAII…FIGL), 25 to 45 (LIYP…ACTF), 60 to 80 (NYSV…FILF), 92 to 112 (GDHY…VSFS), 114 to 134 (MSML…LAGS), 149 to 169 (FILG…IYGA), 188 to 208 (FFIG…AVPF), 222 to 242 (FITA…FYLM), 253 to 273 (YLSH…NIAA), 283 to 303 (LAFS…ILTI), 310 to 330 (FVYL…VQVV), 353 to 373 (AFVL…AGFF), 382 to 402 (VIHA…LISV), and 431 to 451 (VILA…DILL).

Belongs to the complex I subunit 2 family. In terms of assembly, NDH-1 is composed of 14 different subunits. Subunits NuoA, H, J, K, L, M, N constitute the membrane sector of the complex.

It localises to the cell inner membrane. It catalyses the reaction a quinone + NADH + 5 H(+)(in) = a quinol + NAD(+) + 4 H(+)(out). NDH-1 shuttles electrons from NADH, via FMN and iron-sulfur (Fe-S) centers, to quinones in the respiratory chain. The immediate electron acceptor for the enzyme in this species is believed to be a menaquinone. Couples the redox reaction to proton translocation (for every two electrons transferred, four hydrogen ions are translocated across the cytoplasmic membrane), and thus conserves the redox energy in a proton gradient. The protein is NADH-quinone oxidoreductase subunit N of Cytophaga hutchinsonii (strain ATCC 33406 / DSM 1761 / CIP 103989 / NBRC 15051 / NCIMB 9469 / D465).